The following is a 145-amino-acid chain: Small ribosomal subunit protein eS19 (145 aa).

It belongs to the eukaryotic ribosomal protein eS19 family. Component of the small ribosomal subunit.

Its subcellular location is the cytoplasm. The protein resides in the nucleus. Functionally, component of the small ribosomal subunit. The ribosome is a large ribonucleoprotein complex responsible for the synthesis of proteins in the cell. Required for pre-rRNA processing and maturation of 40S ribosomal subunits. The protein is Small ribosomal subunit protein eS19 (rps19) of Myxine glutinosa (Atlantic hagfish).